Reading from the N-terminus, the 70-residue chain is Cytochrome c oxidase subunit 8B, mitochondrial (70 aa).

A mitochondrion-targeting transit peptide spans 1–24 (MPRLPPILRLLQAPAKFTVVPKAH). The Mitochondrial matrix portion of the chain corresponds to 25–38 (VSAKPAKTPTSAVE). Residues 39–60 (QAVGISAIVVGFMVPAGWVLAH) traverse the membrane as a helical segment. Residues 61-70 (LESYKKSSAA) lie on the Mitochondrial intermembrane side of the membrane.

This sequence belongs to the cytochrome c oxidase VIII family. Component of the cytochrome c oxidase (complex IV, CIV), a multisubunit enzyme composed of 14 subunits. The complex is composed of a catalytic core of 3 subunits MT-CO1, MT-CO2 and MT-CO3, encoded in the mitochondrial DNA, and 11 supernumerary subunits COX4I, COX5A, COX5B, COX6A, COX6B, COX6C, COX7A, COX7B, COX7C, COX8 and NDUFA4, which are encoded in the nuclear genome. The complex exists as a monomer or a dimer and forms supercomplexes (SCs) in the inner mitochondrial membrane with NADH-ubiquinone oxidoreductase (complex I, CI) and ubiquinol-cytochrome c oxidoreductase (cytochrome b-c1 complex, complex III, CIII), resulting in different assemblies (supercomplex SCI(1)III(2)IV(1) and megacomplex MCI(2)III(2)IV(2)).

The protein resides in the mitochondrion inner membrane. Its pathway is energy metabolism; oxidative phosphorylation. In terms of biological role, component of the cytochrome c oxidase, the last enzyme in the mitochondrial electron transport chain which drives oxidative phosphorylation. The respiratory chain contains 3 multisubunit complexes succinate dehydrogenase (complex II, CII), ubiquinol-cytochrome c oxidoreductase (cytochrome b-c1 complex, complex III, CIII) and cytochrome c oxidase (complex IV, CIV), that cooperate to transfer electrons derived from NADH and succinate to molecular oxygen, creating an electrochemical gradient over the inner membrane that drives transmembrane transport and the ATP synthase. Cytochrome c oxidase is the component of the respiratory chain that catalyzes the reduction of oxygen to water. Electrons originating from reduced cytochrome c in the intermembrane space (IMS) are transferred via the dinuclear copper A center (CU(A)) of subunit 2 and heme A of subunit 1 to the active site in subunit 1, a binuclear center (BNC) formed by heme A3 and copper B (CU(B)). The BNC reduces molecular oxygen to 2 water molecules using 4 electrons from cytochrome c in the IMS and 4 protons from the mitochondrial matrix. This chain is Cytochrome c oxidase subunit 8B, mitochondrial (Cox8b), found in Mus musculus (Mouse).